The sequence spans 375 residues: Succinyl-diaminopimelate desuccinylase (375 aa).

His-66 lines the Zn(2+) pocket. The active site involves Asp-68. Asp-99 is a Zn(2+) binding site. The active-site Proton acceptor is the Glu-133. 3 residues coordinate Zn(2+): Glu-134, Glu-162, and His-348.

Belongs to the peptidase M20A family. DapE subfamily. Homodimer. Requires Zn(2+) as cofactor. The cofactor is Co(2+).

The catalysed reaction is N-succinyl-(2S,6S)-2,6-diaminopimelate + H2O = (2S,6S)-2,6-diaminopimelate + succinate. It participates in amino-acid biosynthesis; L-lysine biosynthesis via DAP pathway; LL-2,6-diaminopimelate from (S)-tetrahydrodipicolinate (succinylase route): step 3/3. In terms of biological role, catalyzes the hydrolysis of N-succinyl-L,L-diaminopimelic acid (SDAP), forming succinate and LL-2,6-diaminopimelate (DAP), an intermediate involved in the bacterial biosynthesis of lysine and meso-diaminopimelic acid, an essential component of bacterial cell walls. The sequence is that of Succinyl-diaminopimelate desuccinylase from Yersinia pseudotuberculosis serotype O:1b (strain IP 31758).